A 491-amino-acid chain; its full sequence is uncharacterized protein (491 aa).

W99 provides a ligand contact to substrate. Ca(2+) is bound at residue N137. H138 contributes to the substrate binding site. Ca(2+)-binding residues include E177 and D190. R219 contributes to the substrate binding site. Residues D221, H225, and E245 each coordinate Ca(2+). D221 acts as the Nucleophile in catalysis. K224 to H225 provides a ligand contact to substrate. E245 serves as the catalytic Proton donor. The substrate site is built by G249, H312, and R360.

Belongs to the glycosyl hydrolase 13 family. Ca(2+) is required as a cofactor.

The protein resides in the cytoplasm. The protein localises to the nucleus. This is an uncharacterized protein from Schizosaccharomyces pombe (strain 972 / ATCC 24843) (Fission yeast).